A 73-amino-acid chain; its full sequence is Putative membrane protein insertion efficiency factor (73 aa).

This sequence belongs to the UPF0161 family.

The protein localises to the cell inner membrane. Its function is as follows. Could be involved in insertion of integral membrane proteins into the membrane. This chain is Putative membrane protein insertion efficiency factor, found in Neisseria meningitidis serogroup C (strain 053442).